Consider the following 446-residue polypeptide: tRNA modification GTPase MnmE (446 aa).

(6S)-5-formyl-5,6,7,8-tetrahydrofolate contacts are provided by R21, E77, and K116. The region spanning 212 to 370 (GFRIALIGAP…LRAALASHVA (159 aa)) is the TrmE-type G domain. N222 is a K(+) binding site. GTP contacts are provided by residues 222-227 (NAGKST), 241-247 (TDVAGTT), and 266-269 (DTAG). S226 is a Mg(2+) binding site. K(+) contacts are provided by T241, V243, and T246. Residue T247 participates in Mg(2+) binding. A (6S)-5-formyl-5,6,7,8-tetrahydrofolate-binding site is contributed by K446.

This sequence belongs to the TRAFAC class TrmE-Era-EngA-EngB-Septin-like GTPase superfamily. TrmE GTPase family. In terms of assembly, homodimer. Heterotetramer of two MnmE and two MnmG subunits. It depends on K(+) as a cofactor.

Its subcellular location is the cytoplasm. Exhibits a very high intrinsic GTPase hydrolysis rate. Involved in the addition of a carboxymethylaminomethyl (cmnm) group at the wobble position (U34) of certain tRNAs, forming tRNA-cmnm(5)s(2)U34. This Caulobacter vibrioides (strain ATCC 19089 / CIP 103742 / CB 15) (Caulobacter crescentus) protein is tRNA modification GTPase MnmE.